A 201-amino-acid polypeptide reads, in one-letter code: Natural cytotoxicity triggering receptor 3 (201 aa).

The N-terminal stretch at 1–18 (MAWMLLLILIMVHPGSCA) is a signal peptide. The region spanning 19-126 (LWVSQPPEIR…VGTGNGTRLV (108 aa)) is the Ig-like domain. The Extracellular portion of the chain corresponds to 19 to 135 (LWVSQPPEIR…VVEKEHPQLG (117 aa)). An intrachain disulfide couples C39 to C108. Residues N42 and N121 are each glycosylated (N-linked (GlcNAc...) asparagine). A helical transmembrane segment spans residues 136 to 156 (AGTVLLLRAGFYAVSFLSVAV). Topologically, residues 157–201 (GSTVYYQGKCLTWKGPRRQLPAVVPAPLPPPCGSSAHLLPPVPGG) are cytoplasmic.

The protein belongs to the natural cytotoxicity receptor (NCR) family. As to quaternary structure, homodimer in the unliganted form. Interacts with CD3Z. Interacts with and is activated by binding to NCR3LG1. Interacts with and is activated by binding to BAG6. Interacts with and is inhibited by binding to LGALS3. In terms of tissue distribution, selectively expressed by all resting and activated NK cells and weakly expressed in spleen.

It localises to the cell membrane. In terms of biological role, cell membrane receptor of natural killer/NK cells that is activated by binding of extracellular ligands including BAG6 and NCR3LG1. Stimulates NK cells cytotoxicity toward neighboring cells producing these ligands. It controls, for instance, NK cells cytotoxicity against tumor cells. Engagement of NCR3 by BAG6 also promotes myeloid dendritic cells (DC) maturation, both through killing DCs that did not acquire a mature phenotype, and inducing the release by NK cells of TNFA and IFNG which promote DC maturation. The sequence is that of Natural cytotoxicity triggering receptor 3 from Homo sapiens (Human).